The chain runs to 123 residues: Small ribosomal subunit protein uS13 (123 aa).

The disordered stretch occupies residues 97–123 (PVRGQRTHTNAKTRKGRSRLPVAAKKK).

Belongs to the universal ribosomal protein uS13 family. In terms of assembly, part of the 30S ribosomal subunit. Forms a loose heterodimer with protein S19. Forms two bridges to the 50S subunit in the 70S ribosome.

Located at the top of the head of the 30S subunit, it contacts several helices of the 16S rRNA. In the 70S ribosome it contacts the 23S rRNA (bridge B1a) and protein L5 of the 50S subunit (bridge B1b), connecting the 2 subunits; these bridges are implicated in subunit movement. Contacts the tRNAs in the A and P-sites. This chain is Small ribosomal subunit protein uS13, found in Ehrlichia ruminantium (strain Gardel).